We begin with the raw amino-acid sequence, 356 residues long: UDP-N-acetylglucosamine--N-acetylmuramyl-(pentapeptide) pyrophosphoryl-undecaprenol N-acetylglucosamine transferase (356 aa).

UDP-N-acetyl-alpha-D-glucosamine contacts are provided by residues 12 to 14 (TAG), R166, S196, and Q291.

It belongs to the glycosyltransferase 28 family. MurG subfamily.

It localises to the cell membrane. It carries out the reaction di-trans,octa-cis-undecaprenyl diphospho-N-acetyl-alpha-D-muramoyl-L-alanyl-D-glutamyl-meso-2,6-diaminopimeloyl-D-alanyl-D-alanine + UDP-N-acetyl-alpha-D-glucosamine = di-trans,octa-cis-undecaprenyl diphospho-[N-acetyl-alpha-D-glucosaminyl-(1-&gt;4)]-N-acetyl-alpha-D-muramoyl-L-alanyl-D-glutamyl-meso-2,6-diaminopimeloyl-D-alanyl-D-alanine + UDP + H(+). The protein operates within cell wall biogenesis; peptidoglycan biosynthesis. In terms of biological role, cell wall formation. Catalyzes the transfer of a GlcNAc subunit on undecaprenyl-pyrophosphoryl-MurNAc-pentapeptide (lipid intermediate I) to form undecaprenyl-pyrophosphoryl-MurNAc-(pentapeptide)GlcNAc (lipid intermediate II). The sequence is that of UDP-N-acetylglucosamine--N-acetylmuramyl-(pentapeptide) pyrophosphoryl-undecaprenol N-acetylglucosamine transferase from Geobacillus thermodenitrificans (strain NG80-2).